The sequence spans 165 residues: AIG2-like protein A (165 aa).

15–20 (YGSFQD) is a substrate binding site. The active-site Proton acceptor is Glu83.

It belongs to the gamma-glutamylcyclotransferase family. In terms of tissue distribution, expressed only in seeds.

Functionally, putative gamma-glutamylcyclotransferase. This chain is AIG2-like protein A, found in Arabidopsis thaliana (Mouse-ear cress).